A 703-amino-acid chain; its full sequence is Ion-translocating oxidoreductase complex subunit C (703 aa).

2 consecutive 4Fe-4S ferredoxin-type domains span residues 368-397 and 407-436; these read MAPQEQEQSCIRCGLCVDACPAGLLPQQLY and KARNHNLFDCIECGACAFVCPSNIPLVQYY. 8 residues coordinate [4Fe-4S] cluster: C377, C380, C383, C387, C416, C419, C422, and C426. Disordered regions lie at residues 505-558 and 653-674; these read AVPA…EDPR and AQQATAVETPAESPAVVTEEDP. Basic and acidic residues predominate over residues 524 to 539; the sequence is AAREARKAQARERRAQ.

This sequence belongs to the 4Fe4S bacterial-type ferredoxin family. RnfC subfamily. As to quaternary structure, the complex is composed of six subunits: RnfA, RnfB, RnfC, RnfD, RnfE and RnfG. It depends on [4Fe-4S] cluster as a cofactor.

The protein localises to the cell inner membrane. In terms of biological role, part of a membrane-bound complex that couples electron transfer with translocation of ions across the membrane. This chain is Ion-translocating oxidoreductase complex subunit C, found in Serratia proteamaculans (strain 568).